The following is a 102-amino-acid chain: ATP-dependent Clp protease adapter protein ClpS (102 aa).

Belongs to the ClpS family. Binds to the N-terminal domain of the chaperone ClpA.

In terms of biological role, involved in the modulation of the specificity of the ClpAP-mediated ATP-dependent protein degradation. The protein is ATP-dependent Clp protease adapter protein ClpS of Shewanella frigidimarina (strain NCIMB 400).